Consider the following 141-residue polypeptide: Hemoglobin subunit zeta (141 aa).

Serine 1 is subject to N-acetylserine. Residues 1 to 141 (SLTKAERTII…VSGVLTEKYR (141 aa)) enclose the Globin domain. Threonine 28 carries the post-translational modification Phosphothreonine. Position 52 is a phosphoserine (serine 52). Histidine 58 provides a ligand contact to heme b. The residue at position 72 (serine 72) is a Phosphoserine. A heme b-binding site is contributed by histidine 87.

Belongs to the globin family. Heterotetramer of two zeta chains and two epsilon chains.

In terms of biological role, the zeta chain is an alpha-type chain of mammalian embryonic hemoglobin. In Sus scrofa (Pig), this protein is Hemoglobin subunit zeta.